We begin with the raw amino-acid sequence, 542 residues long: Chaperonin GroEL (542 aa).

ATP-binding positions include 29–32 (TLGP), 86–90 (DGTTT), G413, 478–480 (DAL), and D494.

The protein belongs to the chaperonin (HSP60) family. Forms a cylinder of 14 subunits composed of two heptameric rings stacked back-to-back. Interacts with the co-chaperonin GroES.

Its subcellular location is the cytoplasm. It carries out the reaction ATP + H2O + a folded polypeptide = ADP + phosphate + an unfolded polypeptide.. In terms of biological role, together with its co-chaperonin GroES, plays an essential role in assisting protein folding. The GroEL-GroES system forms a nano-cage that allows encapsulation of the non-native substrate proteins and provides a physical environment optimized to promote and accelerate protein folding. In Clostridioides difficile (strain 630) (Peptoclostridium difficile), this protein is Chaperonin GroEL.